The primary structure comprises 299 residues: NAD-dependent protein deacetylase 1 (299 aa).

The Deacetylase sirtuin-type domain maps to 15–292; that stretch reads LPPGTTDLAP…TTVADRLGLR (278 aa). NAD(+)-binding positions include 39–59 and 117–120; these read GAGI…GSLS and QNVD. Residue His135 is the Proton acceptor of the active site. Zn(2+) contacts are provided by Cys143, Cys146, Cys194, and Cys197. NAD(+) is bound by residues 234-236 and Leu278; that span reads GSS.

The protein belongs to the sirtuin family. Class II subfamily. The cofactor is Zn(2+).

The protein localises to the cytoplasm. The enzyme catalyses N(6)-acetyl-L-lysyl-[protein] + NAD(+) + H2O = 2''-O-acetyl-ADP-D-ribose + nicotinamide + L-lysyl-[protein]. In terms of biological role, NAD-dependent protein deacetylase which modulates the activities of several enzymes which are inactive in their acetylated form. The protein is NAD-dependent protein deacetylase 1 of Streptomyces coelicolor (strain ATCC BAA-471 / A3(2) / M145).